The primary structure comprises 605 residues: IQ domain-containing protein IQM2 (605 aa).

An IQ domain is found at 105–134; it reads KHEAAIKLQKVYKSFRTRRKLADCAVLVEQ. Residues 408-505 form a disordered region; that stretch reads QDKVDPSGEE…EEGETKESEV (98 aa). The span at 425–440 shows a compositional bias: basic and acidic residues; the sequence is SISRKQSDLETPEKME. The span at 462-480 shows a compositional bias: acidic residues; it reads DYDSGDDEEEEEEMFELEQ. A compositionally biased stretch (low complexity) spans 481–490; that stretch reads ESMPSEQSSP. A compositionally biased stretch (basic and acidic residues) spans 491-505; sequence RGEEKEEGETKESEV.

In terms of tissue distribution, expressed in rosette and cauline leaves, stems, flowers and siliques, and at lower levels in roots.

It is found in the cytoplasm. Its subcellular location is the nucleus. Functionally, may be involved in biotic and abiotic stress responses. The chain is IQ domain-containing protein IQM2 from Arabidopsis thaliana (Mouse-ear cress).